The chain runs to 137 residues: ATP synthase epsilon chain (137 aa).

Belongs to the ATPase epsilon chain family. F-type ATPases have 2 components, CF(1) - the catalytic core - and CF(0) - the membrane proton channel. CF(1) has five subunits: alpha(3), beta(3), gamma(1), delta(1), epsilon(1). CF(0) has three main subunits: a, b and c.

The protein resides in the cell membrane. Its function is as follows. Produces ATP from ADP in the presence of a proton gradient across the membrane. The sequence is that of ATP synthase epsilon chain from Thermobifida fusca (strain YX).